The chain runs to 251 residues: Probable inactive cytidine deaminase 4 (251 aa).

61-63 is a binding site for substrate; the sequence is NVE. Glu76 (proton donor) is an active-site residue. The CMP/dCMP-type deaminase domain maps to 136-251; it reads EHCSHLKCRA…VFRCHKTAEN (116 aa).

This sequence belongs to the cytidine and deoxycytidylate deaminase family. In terms of assembly, homodimer.

The sequence is that of Probable inactive cytidine deaminase 4 (CDA4) from Arabidopsis thaliana (Mouse-ear cress).